Consider the following 346-residue polypeptide: Putative isoaspartyl peptidase/L-asparaginase (346 aa).

T207 serves as the catalytic Nucleophile. Substrate contacts are provided by residues 235–238 (RVGD) and 257–260 (TGTG).

Belongs to the Ntn-hydrolases family. In terms of assembly, heterodimer of an alpha and beta chain produced by autocleavage. In terms of processing, cleaved into an alpha and beta chain by autocatalysis; this activates the enzyme. The N-terminal residue of the beta subunit is responsible for the nucleophile hydrolase activity.

The enzyme catalyses Cleavage of a beta-linked Asp residue from the N-terminus of a polypeptide.. It carries out the reaction L-asparagine + H2O = L-aspartate + NH4(+). Its function is as follows. Has both L-asparaginase and beta-aspartyl peptidase activity. Does not have aspartylglucosaminidase activity and is inactive toward GlcNAc-L-Asn. Likewise, has no activity toward glutamine. This Dictyostelium discoideum (Social amoeba) protein is Putative isoaspartyl peptidase/L-asparaginase.